A 463-amino-acid polypeptide reads, in one-letter code: NF-kappa-B-activating protein (463 aa).

Residues Met1–Arg14 show a composition bias toward basic residues. The interval Met1–Gly358 is disordered. Basic and acidic residues-rich tracts occupy residues Arg15–Thr29 and Val39–Pro71. Over residues Ser78–Pro98 the composition is skewed to low complexity. Residues Lys107–Gln125 show a composition bias toward basic and acidic residues. 3 positions are modified to phosphoserine: Ser136, Ser189, and Ser191. The residue at position 195 (Thr195) is a Phosphothreonine. Basic residues predominate over residues Pro208–Ser238. Over residues Glu241–Ser267 the composition is skewed to low complexity. Over residues Asp268 to Val278 the composition is skewed to acidic residues. A compositionally biased stretch (basic and acidic residues) spans Trp279–Lys288. The span at Lys289–Lys312 shows a compositional bias: basic residues. Over residues Lys330 to Glu340 the composition is skewed to basic and acidic residues.

Belongs to the NKAP family.

The protein resides in the nucleus. Tumor suppressor involved in maintaining genome integrity. Influences gene expression and mRNA splicing. This is NF-kappa-B-activating protein from Drosophila melanogaster (Fruit fly).